The following is a 331-amino-acid chain: Aspartate carbamoyltransferase catalytic subunit (331 aa).

Carbamoyl phosphate contacts are provided by Arg62 and Thr63. Lys90 serves as a coordination point for L-aspartate. 3 residues coordinate carbamoyl phosphate: Arg112, His145, and Gln148. Residues Arg185 and Arg246 each coordinate L-aspartate. Gly287 and Pro288 together coordinate carbamoyl phosphate.

Belongs to the aspartate/ornithine carbamoyltransferase superfamily. ATCase family. Heterododecamer (2C3:3R2) of six catalytic PyrB chains organized as two trimers (C3), and six regulatory PyrI chains organized as three dimers (R2).

The enzyme catalyses carbamoyl phosphate + L-aspartate = N-carbamoyl-L-aspartate + phosphate + H(+). The protein operates within pyrimidine metabolism; UMP biosynthesis via de novo pathway; (S)-dihydroorotate from bicarbonate: step 2/3. In terms of biological role, catalyzes the condensation of carbamoyl phosphate and aspartate to form carbamoyl aspartate and inorganic phosphate, the committed step in the de novo pyrimidine nucleotide biosynthesis pathway. The protein is Aspartate carbamoyltransferase catalytic subunit of Synechocystis sp. (strain ATCC 27184 / PCC 6803 / Kazusa).